Consider the following 129-residue polypeptide: Arsenate-mycothiol transferase ArsC2 (129 aa).

The protein belongs to the low molecular weight phosphotyrosine protein phosphatase family.

It is found in the cytoplasm. The catalysed reaction is mycothiol + arsenate = arseno-mycothiol + H2O. Functionally, involved in defense against toxic arsenate. Involved in the mycothiol/myoredoxin redox pathway which uses a mycothioltransferase mechanism; facilitates adduct formation between arsenate and mycothiol. The sequence is that of Arsenate-mycothiol transferase ArsC2 (arsC2) from Corynebacterium glutamicum (strain ATCC 13032 / K051).